The primary structure comprises 78 residues: UPF0291 protein Exig_1097 (78 aa).

The disordered stretch occupies residues 57–78 (EEGTDVTPEKLKQAQEEERNKQ). Over residues 63–78 (TPEKLKQAQEEERNKQ) the composition is skewed to basic and acidic residues.

This sequence belongs to the UPF0291 family.

It localises to the cytoplasm. In Exiguobacterium sibiricum (strain DSM 17290 / CCUG 55495 / CIP 109462 / JCM 13490 / 255-15), this protein is UPF0291 protein Exig_1097.